A 660-amino-acid chain; its full sequence is Bifunctional polymyxin resistance protein ArnA (660 aa).

The interval M1 to F304 is formyltransferase ArnAFT. The active-site Proton donor; for formyltransferase activity is H104. Residues R114 and T136–D140 contribute to the (6R)-10-formyltetrahydrofolate site. A dehydrogenase ArnADH region spans residues R316–K660. NAD(+) contacts are provided by residues D349 and D370–I371. UDP-alpha-D-glucuronate contacts are provided by residues A395, Y400, and T434–S435. The active-site Proton acceptor; for decarboxylase activity is the E436. UDP-alpha-D-glucuronate contacts are provided by residues R462, N494, K528–R537, and Y615. The Proton donor; for decarboxylase activity role is filled by R621.

The protein in the N-terminal section; belongs to the Fmt family. UDP-L-Ara4N formyltransferase subfamily. In the C-terminal section; belongs to the NAD(P)-dependent epimerase/dehydratase family. UDP-glucuronic acid decarboxylase subfamily. In terms of assembly, homohexamer, formed by a dimer of trimers.

The catalysed reaction is UDP-alpha-D-glucuronate + NAD(+) = UDP-beta-L-threo-pentopyranos-4-ulose + CO2 + NADH. It catalyses the reaction UDP-4-amino-4-deoxy-beta-L-arabinose + (6R)-10-formyltetrahydrofolate = UDP-4-deoxy-4-formamido-beta-L-arabinose + (6S)-5,6,7,8-tetrahydrofolate + H(+). The protein operates within nucleotide-sugar biosynthesis; UDP-4-deoxy-4-formamido-beta-L-arabinose biosynthesis; UDP-4-deoxy-4-formamido-beta-L-arabinose from UDP-alpha-D-glucuronate: step 1/3. Its pathway is nucleotide-sugar biosynthesis; UDP-4-deoxy-4-formamido-beta-L-arabinose biosynthesis; UDP-4-deoxy-4-formamido-beta-L-arabinose from UDP-alpha-D-glucuronate: step 3/3. It participates in bacterial outer membrane biogenesis; lipopolysaccharide biosynthesis. Functionally, bifunctional enzyme that catalyzes the oxidative decarboxylation of UDP-glucuronic acid (UDP-GlcUA) to UDP-4-keto-arabinose (UDP-Ara4O) and the addition of a formyl group to UDP-4-amino-4-deoxy-L-arabinose (UDP-L-Ara4N) to form UDP-L-4-formamido-arabinose (UDP-L-Ara4FN). The modified arabinose is attached to lipid A and is required for resistance to polymyxin and cationic antimicrobial peptides. The chain is Bifunctional polymyxin resistance protein ArnA from Shewanella sediminis (strain HAW-EB3).